A 148-amino-acid chain; its full sequence is Copper transport protein ctr6 (148 aa).

The Extracellular portion of the chain corresponds to 1–33; the sequence is MNHGGNSTMRHCSMKMTFNTDYDNLCIVFKSWH. Residues 34–54 form a helical membrane-spanning segment; it reads IGNLSQFLLSLLAIAILGYLF. Residues 55 to 108 are Cytoplasmic-facing; that stretch reads ERLRSFTSLKETEFQRGYAGQQSEGLLTHHSKSLKSGRPFRLCALYAVQLVFSY. A helical membrane pass occupies residues 109 to 129; sequence FLMLVAMTYNAYVILAIAIGA. Topologically, residues 130-148 are extracellular; the sequence is AFGYRRSHCDTVQTVGLCH.

This sequence belongs to the copper transporter (Ctr) (TC 1.A.56) family. SLC31A subfamily. In terms of assembly, homotrimer.

The protein localises to the vacuole membrane. Mobilizes stored copper from the vacuole to the cytoplasm under conditions of copper limitation. In Schizosaccharomyces pombe (strain 972 / ATCC 24843) (Fission yeast), this protein is Copper transport protein ctr6 (ctr6).